The primary structure comprises 1468 residues: DNA-directed RNA polymerase subunit beta (1468 aa).

Belongs to the RNA polymerase beta chain family. In terms of assembly, the RNAP catalytic core consists of 2 alpha, 1 beta, 1 beta' and 1 omega subunit. When a sigma factor is associated with the core the holoenzyme is formed, which can initiate transcription.

It carries out the reaction RNA(n) + a ribonucleoside 5'-triphosphate = RNA(n+1) + diphosphate. In terms of biological role, DNA-dependent RNA polymerase catalyzes the transcription of DNA into RNA using the four ribonucleoside triphosphates as substrates. This is DNA-directed RNA polymerase subunit beta from Aquifex aeolicus (strain VF5).